The sequence spans 508 residues: UDP-N-acetylmuramoyl-L-alanyl-D-glutamate--2,6-diaminopimelate ligase (508 aa).

UDP-N-acetyl-alpha-D-muramoyl-L-alanyl-D-glutamate is bound at residue Ser-29. 112–118 (GTNGKTS) serves as a coordination point for ATP. UDP-N-acetyl-alpha-D-muramoyl-L-alanyl-D-glutamate is bound by residues 159–160 (TT), Ser-186, Gln-192, and Arg-194. At Lys-226 the chain carries N6-carboxylysine. Residues Arg-398, 421–424 (DNPR), Gly-473, and Glu-477 each bind meso-2,6-diaminopimelate. The Meso-diaminopimelate recognition motif motif lies at 421–424 (DNPR).

This sequence belongs to the MurCDEF family. MurE subfamily. Mg(2+) serves as cofactor. Carboxylation is probably crucial for Mg(2+) binding and, consequently, for the gamma-phosphate positioning of ATP.

The protein localises to the cytoplasm. The catalysed reaction is UDP-N-acetyl-alpha-D-muramoyl-L-alanyl-D-glutamate + meso-2,6-diaminopimelate + ATP = UDP-N-acetyl-alpha-D-muramoyl-L-alanyl-gamma-D-glutamyl-meso-2,6-diaminopimelate + ADP + phosphate + H(+). It functions in the pathway cell wall biogenesis; peptidoglycan biosynthesis. Its function is as follows. Catalyzes the addition of meso-diaminopimelic acid to the nucleotide precursor UDP-N-acetylmuramoyl-L-alanyl-D-glutamate (UMAG) in the biosynthesis of bacterial cell-wall peptidoglycan. The sequence is that of UDP-N-acetylmuramoyl-L-alanyl-D-glutamate--2,6-diaminopimelate ligase from Janthinobacterium sp. (strain Marseille) (Minibacterium massiliensis).